Here is a 116-residue protein sequence, read N- to C-terminus: Large ribosomal subunit protein uL18 (116 aa).

The protein belongs to the universal ribosomal protein uL18 family. In terms of assembly, part of the 50S ribosomal subunit; part of the 5S rRNA/L5/L18/L25 subcomplex. Contacts the 5S and 23S rRNAs.

Functionally, this is one of the proteins that bind and probably mediate the attachment of the 5S RNA into the large ribosomal subunit, where it forms part of the central protuberance. The polypeptide is Large ribosomal subunit protein uL18 (Azotobacter vinelandii (strain DJ / ATCC BAA-1303)).